We begin with the raw amino-acid sequence, 78 residues long: Translation initiation factor IF-1 (78 aa).

Positions 4 to 78 (KFNNQAKQDK…LKLGRIIGRK (75 aa)) constitute an S1-like domain.

Belongs to the IF-1 family. As to quaternary structure, component of the 30S ribosomal translation pre-initiation complex which assembles on the 30S ribosome in the order IF-2 and IF-3, IF-1 and N-formylmethionyl-tRNA(fMet); mRNA recruitment can occur at any time during PIC assembly.

The protein resides in the cytoplasm. Its function is as follows. One of the essential components for the initiation of protein synthesis. Stabilizes the binding of IF-2 and IF-3 on the 30S subunit to which N-formylmethionyl-tRNA(fMet) subsequently binds. Helps modulate mRNA selection, yielding the 30S pre-initiation complex (PIC). Upon addition of the 50S ribosomal subunit IF-1, IF-2 and IF-3 are released leaving the mature 70S translation initiation complex. This chain is Translation initiation factor IF-1, found in Mycoplasma pneumoniae (strain ATCC 29342 / M129 / Subtype 1) (Mycoplasmoides pneumoniae).